The chain runs to 142 residues: Putative pre-16S rRNA nuclease (142 aa).

The protein belongs to the YqgF nuclease family.

The protein resides in the cytoplasm. Its function is as follows. Could be a nuclease involved in processing of the 5'-end of pre-16S rRNA. In Chloroflexus aggregans (strain MD-66 / DSM 9485), this protein is Putative pre-16S rRNA nuclease.